The primary structure comprises 356 residues: S-adenosylmethionine:tRNA ribosyltransferase-isomerase (356 aa).

Belongs to the QueA family. Monomer.

The protein localises to the cytoplasm. The enzyme catalyses 7-aminomethyl-7-carbaguanosine(34) in tRNA + S-adenosyl-L-methionine = epoxyqueuosine(34) in tRNA + adenine + L-methionine + 2 H(+). It participates in tRNA modification; tRNA-queuosine biosynthesis. Transfers and isomerizes the ribose moiety from AdoMet to the 7-aminomethyl group of 7-deazaguanine (preQ1-tRNA) to give epoxyqueuosine (oQ-tRNA). In Citrobacter koseri (strain ATCC BAA-895 / CDC 4225-83 / SGSC4696), this protein is S-adenosylmethionine:tRNA ribosyltransferase-isomerase.